The following is a 120-amino-acid chain: Immunoglobulin kappa variable 2D-26 (120 aa).

The signal sequence occupies residues 1–20 (MRLPAQLLGLLMLWVPGSSA). The segment at 21–43 (EIVMTQTPLSLSITPGEQASMSC) is framework-1. In terms of domain architecture, Ig-like spans 21–120 (EIVMTQTPLS…YYCMQDAQDP (100 aa)). Residues Cys43 and Cys113 are joined by a disulfide bond. The tract at residues 44–59 (RSSQSLLHSDGYTYLY) is complementarity-determining-1. The framework-2 stretch occupies residues 60 to 74 (WFLQKARPVSTLLIY). Residues 75 to 81 (EVSNRFS) form a complementarity-determining-2 region. Residues 82 to 113 (GVPDRFSGSGSGTDFTLKISRVEAEDFGVYYC) are framework-3. The segment at 114–120 (MQDAQDP) is complementarity-determining-3.

In terms of assembly, immunoglobulins are composed of two identical heavy chains and two identical light chains; disulfide-linked.

The protein resides in the secreted. The protein localises to the cell membrane. Functionally, v region of the variable domain of immunoglobulin light chains that participates in the antigen recognition. Immunoglobulins, also known as antibodies, are membrane-bound or secreted glycoproteins produced by B lymphocytes. In the recognition phase of humoral immunity, the membrane-bound immunoglobulins serve as receptors which, upon binding of a specific antigen, trigger the clonal expansion and differentiation of B lymphocytes into immunoglobulins-secreting plasma cells. Secreted immunoglobulins mediate the effector phase of humoral immunity, which results in the elimination of bound antigens. The antigen binding site is formed by the variable domain of one heavy chain, together with that of its associated light chain. Thus, each immunoglobulin has two antigen binding sites with remarkable affinity for a particular antigen. The variable domains are assembled by a process called V-(D)-J rearrangement and can then be subjected to somatic hypermutations which, after exposure to antigen and selection, allow affinity maturation for a particular antigen. In Homo sapiens (Human), this protein is Immunoglobulin kappa variable 2D-26.